We begin with the raw amino-acid sequence, 1562 residues long: NAC-alpha domain-containing protein 1 (1562 aa).

The segment covering 1 to 13 (MPGEAARAELLLP) has biased composition (low complexity). Disordered regions lie at residues 1 to 24 (MPGE…RTDL), 56 to 110 (FLPS…TEAP), 131 to 226 (SPRA…ADGD), 249 to 288 (SGWG…SSSW), 327 to 365 (TPLS…LQSL), 381 to 458 (RDDT…GAYL), 503 to 941 (TPQA…EPLA), and 953 to 1423 (GCAP…AMSK). Over residues 195–208 (GDARDSEAELRDEL) the composition is skewed to basic and acidic residues. Over residues 275-287 (SSESSLSADSSSS) the composition is skewed to low complexity. The segment covering 331–340 (PEEEEEEAVA) has biased composition (acidic residues). Positions 385–397 (SAASSDSDSASYA) are enriched in low complexity. Polar residues-rich tracts occupy residues 449-458 (PQTSDRGAYL) and 550-564 (QEET…SPQN). A compositionally biased stretch (low complexity) spans 992 to 1007 (PAALDQVQQDDPQPAA). The segment covering 1048-1074 (PGREACLEARAHTGDGAKPDSPQKETL) has biased composition (basic and acidic residues). A Phosphoserine modification is found at S1068. Low complexity-rich tracts occupy residues 1172 to 1182 (APTSAPTSQQP) and 1231 to 1241 (APGTLAGAALP). A compositionally biased stretch (acidic residues) spans 1254-1264 (PQEDSVEDEEP). Composition is skewed to low complexity over residues 1265–1284 (PGSL…AAAV), 1298–1308 (SLSPHSPLLSP), and 1335–1344 (QSPAGPQGLS). The segment covering 1348-1357 (QQEDEDSLEE) has biased composition (acidic residues). The residue at position 1354 (S1354) is a Phosphoserine. The 66-residue stretch at 1411–1476 (SRSEKKARKA…AKIEDLSQQV (66 aa)) folds into the NAC-A/B domain.

This sequence belongs to the NAC-alpha family.

The protein localises to the cytoplasm. The protein resides in the nucleus. May prevent inappropriate targeting of non-secretory polypeptides to the endoplasmic reticulum (ER). May bind to nascent polypeptide chains as they emerge from the ribosome and block their interaction with the signal recognition particle (SRP), which normally targets nascent secretory peptides to the ER. May also reduce the inherent affinity of ribosomes for protein translocation sites in the ER membrane (M sites). The polypeptide is NAC-alpha domain-containing protein 1 (NACAD) (Homo sapiens (Human)).